We begin with the raw amino-acid sequence, 634 residues long: RING finger protein 207 (634 aa).

An RING-type zinc finger spans residues 25 to 64 (CPLCHVQYERPCLLDCFHDFCAGCLRGRATDGRLTCPLCQ). The B box-type; atypical zinc finger occupies 93–145 (VEAVRCANCDLECSEQDVETTYFCNTCGQPLCARCRDETHRARMFARHDIVAL). Zn(2+) contacts are provided by cysteine 98, cysteine 101, cysteine 127, and histidine 132. 2 coiled-coil regions span residues 422–457 (EHCR…KHHS) and 494–518 (EIWE…HDLL). Residues 552–634 (FQAPVDEQSE…DVPTWREHPT (83 aa)) form a disordered region.

As to quaternary structure, interacts with the core-glycosylated, but not the fully glycosylated form of KCNH2/HERG. Interacts with DNAJA1 and HSPA8. Interacts (via the C-terminus) with HSPA1A; this interaction additively increases KCNH2 expression.

It is found in the cytoplasm. Functionally, plays a role in cardiac repolarization possibly by stabilizing membrane expression of the potassium channel KCNH2/HERG, or by assisting its synthesis, folding or export from the endoplasmic reticulum, in a heat shock protein-dependent manner. In Homo sapiens (Human), this protein is RING finger protein 207 (RNF207).